We begin with the raw amino-acid sequence, 519 residues long: Carboxyl-terminal-processing peptidase 3, chloroplastic (519 aa).

Residues 186–274 (YQSFRIGSDG…IKLKNVNGSG (89 aa)) enclose the PDZ domain. Residues Ser-407 and Lys-432 each act as charge relay system in the active site.

This sequence belongs to the peptidase S41A family.

It is found in the plastid. The protein resides in the chloroplast thylakoid lumen. The catalysed reaction is The enzyme shows specific recognition of a C-terminal tripeptide, Xaa-Yaa-Zaa, in which Xaa is preferably Ala or Leu, Yaa is preferably Ala or Tyr, and Zaa is preferably Ala, but then cleaves at a variable distance from the C-terminus. A typical cleavage is -Ala-Ala-|-Arg-Ala-Ala-Lys-Glu-Asn-Tyr-Ala-Leu-Ala-Ala.. In terms of biological role, protease involved in the C-terminal processing of the chloroplastic D1 protein of photosystem II. This proteolytic processing is necessary to allow the light-driven assembly of the tetranuclear manganese cluster, which is responsible for photosynthetic water oxidation. This chain is Carboxyl-terminal-processing peptidase 3, chloroplastic (CTPA3), found in Arabidopsis thaliana (Mouse-ear cress).